We begin with the raw amino-acid sequence, 199 residues long: Probable GTP-binding protein EngB (199 aa).

In terms of domain architecture, EngB-type G spans 28-199; that stretch reads DLPEIALAGR…ESWDTILEYL (172 aa). GTP-binding positions include 36–43, 63–67, 81–84, 148–151, and 180–182; these read GRSNVGKS, GKTQL, DVPG, TKAD, and FSS. Serine 43 and threonine 65 together coordinate Mg(2+).

Belongs to the TRAFAC class TrmE-Era-EngA-EngB-Septin-like GTPase superfamily. EngB GTPase family. Requires Mg(2+) as cofactor.

Its function is as follows. Necessary for normal cell division and for the maintenance of normal septation. The chain is Probable GTP-binding protein EngB from Streptococcus equi subsp. equi (strain 4047).